Reading from the N-terminus, the 363-residue chain is Chorismate synthase (363 aa).

NADP(+) contacts are provided by arginine 48 and arginine 54. Residues 125 to 127 (RSS), 237 to 238 (NA), glycine 277, 292 to 296 (KPTSS), and arginine 318 contribute to the FMN site.

Belongs to the chorismate synthase family. Homotetramer. FMNH2 is required as a cofactor.

The catalysed reaction is 5-O-(1-carboxyvinyl)-3-phosphoshikimate = chorismate + phosphate. It participates in metabolic intermediate biosynthesis; chorismate biosynthesis; chorismate from D-erythrose 4-phosphate and phosphoenolpyruvate: step 7/7. In terms of biological role, catalyzes the anti-1,4-elimination of the C-3 phosphate and the C-6 proR hydrogen from 5-enolpyruvylshikimate-3-phosphate (EPSP) to yield chorismate, which is the branch point compound that serves as the starting substrate for the three terminal pathways of aromatic amino acid biosynthesis. This reaction introduces a second double bond into the aromatic ring system. This chain is Chorismate synthase, found in Pseudomonas putida (strain W619).